The chain runs to 272 residues: Indole-3-glycerol phosphate synthase (272 aa).

The protein belongs to the TrpC family.

It catalyses the reaction 1-(2-carboxyphenylamino)-1-deoxy-D-ribulose 5-phosphate + H(+) = (1S,2R)-1-C-(indol-3-yl)glycerol 3-phosphate + CO2 + H2O. The protein operates within amino-acid biosynthesis; L-tryptophan biosynthesis; L-tryptophan from chorismate: step 4/5. In Paenarthrobacter aurescens (strain TC1), this protein is Indole-3-glycerol phosphate synthase.